The primary structure comprises 91 residues: Small ribosomal subunit protein uS19 (91 aa).

The protein belongs to the universal ribosomal protein uS19 family.

Functionally, protein S19 forms a complex with S13 that binds strongly to the 16S ribosomal RNA. The chain is Small ribosomal subunit protein uS19 from Actinobacillus pleuropneumoniae serotype 7 (strain AP76).